A 601-amino-acid polypeptide reads, in one-letter code: MSTISIHHVGILRNPLPSKNKRALINNPWSLSLPRSSSASRLVKPCRISSKPDTKPAEITRRSANYEPSLWDFDYLQSLNGHQHYKKEEQLKREEELIVQVKMLLGTKMEAVKQLELIDDLKNLGLSYFFRDEIKKILTSIYNNSFENNNKVGDLYFTALGFRLLRQHGFNVSQRIFDCFKNEKGIHFDETLIGEDIKATLQLYEASFHLREGENTLELARQISTKYLQKMVDEGRINDENLSSWIRHSLDLPLHWRIQRLEARWFLDAYAAREDKNPLIFELAKLDFNIIQATQQEELKEVSRWWNDSCLAEKLPFVRDRIVKCCFWAVGLFELLEFGYQRKITAIIIHLITAIDDVYDVYGTLDELQLLTNAIRRWDTLSIDQLPYYMQLCYMTLHNYVSDLGYDILKDRGINTIPHIHQTWVSLVEAYLKEAKWYESGYTPSLEEYLNNAGFSIGVIPIVVALELSIPNSTIHHRTRIDHRHEILHQSGLVLRLADDLGTAQHEMEKGDVPKAIQCYMKDTNASEEEAREHVRFMIGEAWKGLNTAMAKADDCPFTEQAVEAAANLGRAAQFIYLDGDGHGNFQIRQHVEKLFFHPYV.

The N-terminal 35 residues, 1 to 35 (MSTISIHHVGILRNPLPSKNKRALINNPWSLSLPR), are a transit peptide targeting the chloroplast. Mn(2+)-binding residues include D356 and D360. Positions 356-360 (DDVYD) match the DDXXD motif motif. 2 homodimerization regions span residues 362-368 (YGTLDEL) and 434-471 (EAKW…LSIP). Mn(2+)-binding residues include D499 and E507.

It belongs to the terpene synthase family. As to quaternary structure, homodimer. It depends on Mn(2+) as a cofactor. Mg(2+) is required as a cofactor. Expressed in peltate glandular trichomes. Present at low levels in flowers, leaves and stems.

The protein resides in the plastid. It is found in the chloroplast. It carries out the reaction (2E)-geranyl diphosphate = beta-phellandrene + diphosphate. The enzyme catalyses (2E)-geranyl diphosphate = (1R,5R)-sabinene + diphosphate. It functions in the pathway secondary metabolite biosynthesis; terpenoid biosynthesis. In terms of biological role, involved in the biosynthesis of phenolic monoterpenes natural products. Monoterpene synthase that catalyzes mainly the formation of olefins such as sabinene and beta-phellandrene, and minor amounts of other monoterpenes (e.g. myrcene, gamma-terpinene, alpha-thujene and alpha-pinene) from geranyl diphosphate (GPP). The chain is Beta-phellandrene synthase from Origanum vulgare (Wild marjoram).